A 166-amino-acid polypeptide reads, in one-letter code: Phospholipase A2 inhibitor clone 10 (166 aa).

A signal peptide spans 1-19 (MRLILLSSLLLLGIFLANG). The region spanning 46–161 (LKYSFLTVHR…CDDNLLVVCE (116 aa)) is the C-type lectin domain. Cystine bridges form between Cys83–Cys160 and Cys138–Cys152. Asn122 carries an N-linked (GlcNAc...) asparagine glycan.

The protein belongs to the alpha-type phospholipase A2 inhibitor family. As to quaternary structure, homotrimer; non-covalently linked. In terms of tissue distribution, expressed by the liver.

It is found in the secreted. Its function is as follows. This phospholipase A2 inhibitor binds directly phospholipase A2 in the presence or absence of calcium. The protein is Phospholipase A2 inhibitor clone 10 of Bothrops moojeni (Lance-headed viper).